The sequence spans 109 residues: Sperm-specific class P protein 16 (109 aa).

Residues 2 to 109 (SLTADPPACT…TVTIPMSATA (108 aa)) form the MSP domain.

In terms of tissue distribution, expressed at higher level in testis.

The chain is Sperm-specific class P protein 16 (ssp-16) from Caenorhabditis elegans.